Reading from the N-terminus, the 385-residue chain is MAAGTSIGTTPGGSTSPETPPEHGLTGTVISVDAMGGDTGPAAVVGGLAIAAEKNPDIAFLLHGDATELTALVAKRRALDGRVAIRGTSDVVTMHDKPSQVMRGGKDTSMWSAIDAVRNGEATVCVSCGNTGALMALSMVRLRKVPGINRPAIACLWPSRAKSGFNVMLDVGADIKADAQDLLQYALMGASYARNGLGNPTPRIGLLNVGTEEHKGRAELKAAHDLIAQAAPDNDFEFVGFVEGGDIPSDKVDVIVTDGFTGNVALKTAEGTAALIRDFLTQAFEKTPWSKIAAMLAYTSLRRLSKRIDPRRVNGGVFLGLNGTVVKSHGSADATGVAAAIKLAFILAQSGFTERLAARVASAGRARASGAATPEEEAVSGSANG.

A compositionally biased stretch (low complexity) spans 1-17; that stretch reads MAAGTSIGTTPGGSTSP. The interval 1 to 28 is disordered; it reads MAAGTSIGTTPGGSTSPETPPEHGLTGT.

Belongs to the PlsX family. Homodimer. Probably interacts with PlsY.

It localises to the cytoplasm. The catalysed reaction is a fatty acyl-[ACP] + phosphate = an acyl phosphate + holo-[ACP]. It participates in lipid metabolism; phospholipid metabolism. Its function is as follows. Catalyzes the reversible formation of acyl-phosphate (acyl-PO(4)) from acyl-[acyl-carrier-protein] (acyl-ACP). This enzyme utilizes acyl-ACP as fatty acyl donor, but not acyl-CoA. This Dinoroseobacter shibae (strain DSM 16493 / NCIMB 14021 / DFL 12) protein is Phosphate acyltransferase.